The sequence spans 192 residues: NF-kappa-B inhibitor-interacting Ras-like protein 1 (192 aa).

Residue 11-18 (GLLSVGKT) coordinates GTP. An Effector region motif is present at residues 35–43 (DCETMEDVY). Residues 58-93 (HLYDTRGLQEGVELPKHYFSFADGFVLVYSVNNLES) form an interactions with NFKBIA and NFKBIB region. GTP contacts are provided by residues 61–65 (DTRGL) and 120–123 (NKID). Residues 168–192 (LSQPQSKSSFPLPGRKNKGNSSSEN) form a disordered region.

Belongs to the small GTPase superfamily. Ras family. KappaB-Ras subfamily. In terms of assembly, interacts with both NF-kappa-B inhibitor alpha (NFKBIA) and beta (NFKBIB) in vitro. However, it probably only interacts with NFKBIB in vivo. Forms a complex with NFKBIB and NF-kappa-B heterodimer (p50/NFKB1 and p65/RELA). Also interacts with c-Rel (REL).

The protein localises to the cytoplasm. In terms of biological role, atypical Ras-like protein that acts as a potent regulator of NF-kappa-B activity by preventing the degradation of NF-kappa-B inhibitor beta (NFKBIB) by most signals, explaining why NFKBIB is more resistant to degradation. May act by blocking phosphorylation of NFKBIB and mediating cytoplasmic retention of p65/RELA NF-kappa-B subunit. It is unclear whether it acts as a GTPase. Both GTP- and GDP-bound forms block phosphorylation of NFKBIB. In Macaca fascicularis (Crab-eating macaque), this protein is NF-kappa-B inhibitor-interacting Ras-like protein 1 (NKIRAS1).